Consider the following 188-residue polypeptide: Acireductone dioxygenase (188 aa).

Fe(2+) is bound by residues His97, His99, Glu103, and His141. 4 residues coordinate Ni(2+): His97, His99, Glu103, and His141.

It belongs to the acireductone dioxygenase (ARD) family. As to quaternary structure, monomer. Requires Fe(2+) as cofactor. Ni(2+) serves as cofactor.

The catalysed reaction is 1,2-dihydroxy-5-(methylsulfanyl)pent-1-en-3-one + O2 = 3-(methylsulfanyl)propanoate + CO + formate + 2 H(+). The enzyme catalyses 1,2-dihydroxy-5-(methylsulfanyl)pent-1-en-3-one + O2 = 4-methylsulfanyl-2-oxobutanoate + formate + 2 H(+). The protein operates within amino-acid biosynthesis; L-methionine biosynthesis via salvage pathway; L-methionine from S-methyl-5-thio-alpha-D-ribose 1-phosphate: step 5/6. Catalyzes 2 different reactions between oxygen and the acireductone 1,2-dihydroxy-3-keto-5-methylthiopentene (DHK-MTPene) depending upon the metal bound in the active site. Fe-containing acireductone dioxygenase (Fe-ARD) produces formate and 2-keto-4-methylthiobutyrate (KMTB), the alpha-ketoacid precursor of methionine in the methionine recycle pathway. Ni-containing acireductone dioxygenase (Ni-ARD) produces methylthiopropionate, carbon monoxide and formate, and does not lie on the methionine recycle pathway. This Xanthomonas oryzae pv. oryzae (strain MAFF 311018) protein is Acireductone dioxygenase.